Here is a 201-residue protein sequence, read N- to C-terminus: Small ribosomal subunit protein uS4c (201 aa).

In terms of domain architecture, S4 RNA-binding spans 89–157; sequence MRLDNILFRL…VQNYIASSDP (69 aa).

This sequence belongs to the universal ribosomal protein uS4 family. As to quaternary structure, part of the 30S ribosomal subunit. Contacts protein S5. The interaction surface between S4 and S5 is involved in control of translational fidelity.

It is found in the plastid. Its subcellular location is the chloroplast. Functionally, one of the primary rRNA binding proteins, it binds directly to 16S rRNA where it nucleates assembly of the body of the 30S subunit. In terms of biological role, with S5 and S12 plays an important role in translational accuracy. This chain is Small ribosomal subunit protein uS4c (rps4), found in Triticum aestivum (Wheat).